Consider the following 262-residue polypeptide: Acyl-[acyl-carrier-protein]--UDP-N-acetylglucosamine O-acyltransferase (262 aa).

It belongs to the transferase hexapeptide repeat family. LpxA subfamily. As to quaternary structure, homotrimer.

It is found in the cytoplasm. It carries out the reaction a (3R)-hydroxyacyl-[ACP] + UDP-N-acetyl-alpha-D-glucosamine = a UDP-3-O-[(3R)-3-hydroxyacyl]-N-acetyl-alpha-D-glucosamine + holo-[ACP]. The protein operates within glycolipid biosynthesis; lipid IV(A) biosynthesis; lipid IV(A) from (3R)-3-hydroxytetradecanoyl-[acyl-carrier-protein] and UDP-N-acetyl-alpha-D-glucosamine: step 1/6. In terms of biological role, involved in the biosynthesis of lipid A, a phosphorylated glycolipid that anchors the lipopolysaccharide to the outer membrane of the cell. This Aliivibrio fischeri (strain ATCC 700601 / ES114) (Vibrio fischeri) protein is Acyl-[acyl-carrier-protein]--UDP-N-acetylglucosamine O-acyltransferase.